The sequence spans 124 residues: Small ribosomal subunit protein uS12 (124 aa).

A disordered region spans residues 1-30; the sequence is MPTIQQLVRKGRTPKVTKTKAPALKANPQQ. A compositionally biased stretch (basic residues) spans 9 to 18; sequence RKGRTPKVTK.

The protein belongs to the universal ribosomal protein uS12 family. As to quaternary structure, part of the 30S ribosomal subunit. Contacts proteins S8 and S17. May interact with IF1 in the 30S initiation complex.

In terms of biological role, with S4 and S5 plays an important role in translational accuracy. Functionally, interacts with and stabilizes bases of the 16S rRNA that are involved in tRNA selection in the A site and with the mRNA backbone. Located at the interface of the 30S and 50S subunits, it traverses the body of the 30S subunit contacting proteins on the other side and probably holding the rRNA structure together. The combined cluster of proteins S8, S12 and S17 appears to hold together the shoulder and platform of the 30S subunit. The sequence is that of Small ribosomal subunit protein uS12 from Leifsonia xyli subsp. xyli (strain CTCB07).